Here is a 243-residue protein sequence, read N- to C-terminus: Uridylate kinase (243 aa).

14–17 (KLSG) serves as a coordination point for ATP. G57 lines the UMP pocket. Residues G58 and R62 each contribute to the ATP site. UMP contacts are provided by residues D77 and 139-146 (TGRPYFTT). Residues N167, Y173, and D176 each contribute to the ATP site.

Belongs to the UMP kinase family. Homohexamer.

The protein localises to the cytoplasm. It catalyses the reaction UMP + ATP = UDP + ADP. The protein operates within pyrimidine metabolism; CTP biosynthesis via de novo pathway; UDP from UMP (UMPK route): step 1/1. Inhibited by UTP. Functionally, catalyzes the reversible phosphorylation of UMP to UDP. This is Uridylate kinase from Mycoplasmopsis pulmonis (strain UAB CTIP) (Mycoplasma pulmonis).